We begin with the raw amino-acid sequence, 955 residues long: Kinesin-like protein KIN-14L (955 aa).

Residues 19-140 (AARRFQAVQW…CILGLKAYHE (122 aa)) form the Calponin-homology (CH) domain. One can recognise a Kinesin motor domain in the interval 363-685 (NIRVYCRVRP…LKFAQRVSTV (323 aa)). 445–452 (GQTGSGKT) lines the ATP pocket. Positions 692–719 (AHKETREVMHLKEQIENLKRALGTEEWN) form a coiled coil. Residues 878-942 (RKENIPADPR…GKPIENGKKD (65 aa)) are disordered. Residues 894-916 (NNFSHIKSPDTSNAKTMRRQSLT) are compositionally biased toward polar residues.

It belongs to the TRAFAC class myosin-kinesin ATPase superfamily. Kinesin family. KIN-14 subfamily.

This Arabidopsis thaliana (Mouse-ear cress) protein is Kinesin-like protein KIN-14L.